Reading from the N-terminus, the 452-residue chain is Phosphatidate cytidylyltransferase, mitochondrial (452 aa).

This sequence belongs to the TAM41 family. Mg(2+) is required as a cofactor.

The protein resides in the mitochondrion inner membrane. It catalyses the reaction a 1,2-diacyl-sn-glycero-3-phosphate + CTP + H(+) = a CDP-1,2-diacyl-sn-glycerol + diphosphate. It functions in the pathway phospholipid metabolism; CDP-diacylglycerol biosynthesis; CDP-diacylglycerol from sn-glycerol 3-phosphate: step 3/3. Functionally, catalyzes the conversion of phosphatidic acid (PA) to CDP-diacylglycerol (CDP-DAG), an essential intermediate in the synthesis of phosphatidylglycerol, cardiolipin and phosphatidylinositol. The protein is Phosphatidate cytidylyltransferase, mitochondrial (TAMM41) of Homo sapiens (Human).